Reading from the N-terminus, the 1196-residue chain is Beta/alpha-amylase (1196 aa).

The first 35 residues, 1-35, serve as a signal peptide directing secretion; that stretch reads MTLYRSLWKKGCMLLLSLVLSLTAFIGSPSNTASA. A beta-amylase region spans residues 36-454; it reads AVADDFQASV…IISKAKPDNN (419 aa). Asp-76 serves as a coordination point for substrate. Ca(2+)-binding residues include Glu-83 and Asp-87. The substrate site is built by His-116 and Asp-124. Cys-118 and Cys-126 form a disulfide bridge. Glu-170 is a Ca(2+) binding site. Catalysis depends on Glu-198, which acts as the Proton donor. Substrate contacts are provided by Lys-314, His-319, and Thr-357. Residue Glu-394 is the Proton acceptor of the active site. Substrate is bound by residues 395–396 and Arg-423; that span reads NA. 2 repeats span residues 455 to 558 and 565 to 668; these read GGTG…APAG and GGTT…APSG. A compositionally biased stretch (polar residues) spans 544–553; the sequence is NSGNAGTITS. Positions 544–566 are disordered; it reads NSGNAGTITSGAPAGANPGDGGG. An alpha-amylase region spans residues 669-1196; the sequence is SVLSVVTSTY…APKEVKVFTK (528 aa).

The protein in the N-terminal section; belongs to the glycosyl hydrolase 14 family. This sequence in the C-terminal section; belongs to the glycosyl hydrolase 13 family. Ca(2+) is required as a cofactor.

It localises to the secreted. The enzyme catalyses Hydrolysis of (1-&gt;4)-alpha-D-glucosidic linkages in polysaccharides so as to remove successive maltose units from the non-reducing ends of the chains.. It catalyses the reaction Endohydrolysis of (1-&gt;4)-alpha-D-glucosidic linkages in polysaccharides containing three or more (1-&gt;4)-alpha-linked D-glucose units.. Functionally, the precursor protein is proteolytically cleaved to produce multiform beta-amylases and a 48 kDa alpha-amylase after secretion. The polypeptide is Beta/alpha-amylase (Paenibacillus polymyxa (Bacillus polymyxa)).